The primary structure comprises 138 residues: Small ribosomal subunit protein uS11c (138 aa).

Positions 1–23 (MAKPILRIGSRKNTRSGSRKNVR) are disordered. Positions 9-23 (GSRKNTRSGSRKNVR) are enriched in basic residues.

It belongs to the universal ribosomal protein uS11 family. As to quaternary structure, part of the 30S ribosomal subunit.

The protein localises to the plastid. It is found in the chloroplast. The sequence is that of Small ribosomal subunit protein uS11c from Crucihimalaya wallichii (Rock-cress).